A 158-amino-acid polypeptide reads, in one-letter code: uncharacterized protein (158 aa).

2 consecutive transmembrane segments (helical) span residues 66–86 (LLIIVAVLFPPLYISGLPWIM) and 94–114 (FFSLSITSFIMVPFLLISLTI).

It localises to the membrane. This is an uncharacterized protein from Saccharomyces cerevisiae (strain ATCC 204508 / S288c) (Baker's yeast).